The primary structure comprises 152 residues: Transposase for insertion sequence element IS200 (152 aa).

2 residues coordinate Mg(2+): His61 and His63. Tyr125 functions as the Nucleophile in the catalytic mechanism. Gln129 serves as a coordination point for Mg(2+).

It belongs to the transposase 17 family. In terms of assembly, homodimer. Requires Mg(2+) as cofactor.

Its function is as follows. Transposase responsible for transposition of the IS200 insertion sequence (IS) element. Transposition occurs in 2 main steps, excision from the donor DNA 'top strand' into a single strand circle and its subsequent reinsertion into the DNA target. This increases the copy number of the IS. The protein is Transposase for insertion sequence element IS200 (tnpA1) of Salmonella typhi.